A 165-amino-acid chain; its full sequence is Neurotrophin-3 (165 aa).

The signal sequence occupies residues 1-3; that stretch reads IQS. The propeptide occupies 4–119; it reads TSMDQGSLSE…VLNRTSRRKR (116 aa). N-linked (GlcNAc...) asparagine glycosylation occurs at asparagine 112.

Belongs to the NGF-beta family.

Its subcellular location is the secreted. Functionally, seems to promote the survival of visceral and proprioceptive sensory neurons. This chain is Neurotrophin-3 (NTF3), found in Anilius scytale (Coral cylinder snake).